The following is a 309-amino-acid chain: Porphobilinogen deaminase (309 aa).

Position 244 is an S-(dipyrrolylmethanemethyl)cysteine (Cys-244).

Belongs to the HMBS family. As to quaternary structure, monomer. Dipyrromethane is required as a cofactor.

It catalyses the reaction 4 porphobilinogen + H2O = hydroxymethylbilane + 4 NH4(+). It functions in the pathway porphyrin-containing compound metabolism; protoporphyrin-IX biosynthesis; coproporphyrinogen-III from 5-aminolevulinate: step 2/4. Its function is as follows. Tetrapolymerization of the monopyrrole PBG into the hydroxymethylbilane pre-uroporphyrinogen in several discrete steps. This is Porphobilinogen deaminase from Listeria monocytogenes serotype 4b (strain CLIP80459).